The following is an 89-amino-acid chain: Small ribosomal subunit protein uS15 (89 aa).

The protein belongs to the universal ribosomal protein uS15 family. Part of the 30S ribosomal subunit. Forms a bridge to the 50S subunit in the 70S ribosome, contacting the 23S rRNA.

Its function is as follows. One of the primary rRNA binding proteins, it binds directly to 16S rRNA where it helps nucleate assembly of the platform of the 30S subunit by binding and bridging several RNA helices of the 16S rRNA. Functionally, forms an intersubunit bridge (bridge B4) with the 23S rRNA of the 50S subunit in the ribosome. The sequence is that of Small ribosomal subunit protein uS15 from Ureaplasma parvum serovar 3 (strain ATCC 27815 / 27 / NCTC 11736).